The sequence spans 1360 residues: Zinc finger protein GLI1 (1360 aa).

A disordered region spans residues 198-245 (DTIGSKRLEDGSEGDISSPASVGTQDPLLGLLDGRDDLEKDDGKHEPE). The span at 230 to 245 (DGRDDLEKDDGKHEPE) shows a compositional bias: basic and acidic residues. The C2H2-type 1 zinc-finger motif lies at 250–275 (TNCHWESCTKEFDTQEHLVHHINNEH). The interval 298-306 (KAQYMLVVH) is interaction with DNA. 3 consecutive C2H2-type zinc fingers follow at residues 316–340 (HKCTFEGCNKAYSRLENLKTHLRSH), 346–371 (YVCEHEGCNKAFSNASDRAKHQNRTH), and 377–402 (YVCKIPGCTKRYTDPSSLRKHVKTVH). Interaction with DNA regions lie at residues 360-365 (ASDRAK) and 390-396 (DPSSLRK). 4 disordered regions span residues 390 to 434 (DPSS…NVKG), 457 to 500 (ITLK…SFED), 718 to 740 (IIHPAQAPGAGIRRASDPARTGG), and 1120 to 1213 (YMNY…IQPQ). Residues 461-473 (SQPSPGGQSSCSS) show a composition bias toward low complexity. A compositionally biased stretch (polar residues) spans 474–496 (ERSPLGSTNNNDSGVEMNANTGG). The segment covering 1134–1143 (SPSSQDSQSS) has biased composition (low complexity). Residues 1173–1190 (RQHSVSSQSTYMGSPNQL) are compositionally biased toward polar residues.

It belongs to the GLI C2H2-type zinc-finger protein family.

It localises to the cytoplasm. Its subcellular location is the nucleus. Acts as a transcriptional activator. Binds to the DNA consensus sequence 5'-GACCACCCA-3'. May regulate the transcription of specific genes during normal development. Mediates SHH signaling. Plays a role in cell proliferation and differentiation via its role in SHH signaling. The sequence is that of Zinc finger protein GLI1 (gli1) from Xenopus laevis (African clawed frog).